The sequence spans 157 residues: Ribonuclease H (157 aa).

Positions 1–142 (MKKKIKIFID…CDFLAKISAK (142 aa)) constitute an RNase H type-1 domain. Residues aspartate 10, glutamate 48, aspartate 70, and aspartate 134 each contribute to the Mg(2+) site.

The protein belongs to the RNase H family. Monomer. Mg(2+) is required as a cofactor.

It is found in the cytoplasm. The enzyme catalyses Endonucleolytic cleavage to 5'-phosphomonoester.. In terms of biological role, endonuclease that specifically degrades the RNA of RNA-DNA hybrids. The polypeptide is Ribonuclease H (Wigglesworthia glossinidia brevipalpis).